The chain runs to 917 residues: PAX3- and PAX7-binding protein 1 (917 aa).

Basic residues predominate over residues 1–11 (MFRKARRVNVR). 3 disordered regions span residues 1–123 (MFRK…FKVK), 143–205 (LEKS…GAFS), and 229–275 (RKKR…RIVF). Residue Ser16 is modified to Phosphoserine. The span at 16–28 (SEEEERERDEEQE) shows a compositional bias: acidic residues. Composition is skewed to gly residues over residues 40–50 (EEAGPGGGDRA) and 73–85 (AEAG…GAEP). A Glycyl lysine isopeptide (Lys-Gly) (interchain with G-Cter in SUMO1); alternate cross-link involves residue Lys149. Residue Lys149 forms a Glycyl lysine isopeptide (Lys-Gly) (interchain with G-Cter in SUMO2); alternate linkage. Residues Ser154, Ser155, and Ser158 each carry the phosphoserine modification. A compositionally biased stretch (basic and acidic residues) spans 161 to 172 (PLDKTGHVKDTN). The segment covering 183–193 (GEDEMDMESEK) has biased composition (acidic residues). Ser191 carries the phosphoserine modification. Residues 234-256 (MARELGDFTPHDNEPGKGRLVRE) show a composition bias toward basic and acidic residues. Acidic residues predominate over residues 257–268 (DENDASDDEDDD). 2 positions are modified to phosphoserine: Ser262 and Ser295. Disordered stretches follow at residues 362–381 (SSDA…TPSN) and 530–564 (AERE…EETS). A necessary and sufficient for interaction with PAX7 region spans residues 378–558 (TPSNEMTPVT…MADHLEGLSS (181 aa)). Over residues 542-554 (AREQTGKMADHLE) the composition is skewed to basic and acidic residues. Phosphoserine is present on residues Ser557 and Ser558. Thr563 is modified (phosphothreonine).

The protein belongs to the GCF family. In terms of assembly, interacts with PAX3 and PAX7. Interacts with WDR5; associates with a histone methyltransferase (HMT) complex composed at least of RBBP5, ASH2L, SET1, SET2 and KMT2A/MLL1, KMT2D/MLL2, KMT2C/MLL3 and KMT2B/MLL4 through direct interaction with WDR5. Ubiquitous.

The protein localises to the nucleus. Its function is as follows. Adapter protein linking the transcription factors PAX3 and PAX7 to the histone methylation machinery and involved in myogenesis. Associates with a histone methyltransferase complex that specifically mediates dimethylation and trimethylation of 'Lys-4' of histone H3. Mediates the recruitment of that complex to the transcription factors PAX3 and PAX7 on chromatin to regulate the expression of genes involved in muscle progenitor cells proliferation including ID3 and CDC20. The chain is PAX3- and PAX7-binding protein 1 (PAXBP1) from Homo sapiens (Human).